A 427-amino-acid chain; its full sequence is Serine--tRNA ligase (427 aa).

Position 235–237 (235–237) interacts with L-serine; it reads TAE. ATP-binding positions include 266-268 and valine 282; that span reads RRE. Position 289 (glutamate 289) interacts with L-serine. Position 353-356 (353-356) interacts with ATP; it reads EASS. Position 389 (serine 389) interacts with L-serine.

It belongs to the class-II aminoacyl-tRNA synthetase family. Type-1 seryl-tRNA synthetase subfamily. In terms of assembly, homodimer. The tRNA molecule binds across the dimer.

It is found in the cytoplasm. It carries out the reaction tRNA(Ser) + L-serine + ATP = L-seryl-tRNA(Ser) + AMP + diphosphate + H(+). It catalyses the reaction tRNA(Sec) + L-serine + ATP = L-seryl-tRNA(Sec) + AMP + diphosphate + H(+). Its pathway is aminoacyl-tRNA biosynthesis; selenocysteinyl-tRNA(Sec) biosynthesis; L-seryl-tRNA(Sec) from L-serine and tRNA(Sec): step 1/1. Its function is as follows. Catalyzes the attachment of serine to tRNA(Ser). Is also able to aminoacylate tRNA(Sec) with serine, to form the misacylated tRNA L-seryl-tRNA(Sec), which will be further converted into selenocysteinyl-tRNA(Sec). The polypeptide is Serine--tRNA ligase (Chlorobaculum parvum (strain DSM 263 / NCIMB 8327) (Chlorobium vibrioforme subsp. thiosulfatophilum)).